A 203-amino-acid chain; its full sequence is Imidazoleglycerol-phosphate dehydratase (203 aa).

The protein belongs to the imidazoleglycerol-phosphate dehydratase family.

The protein localises to the cytoplasm. The enzyme catalyses D-erythro-1-(imidazol-4-yl)glycerol 3-phosphate = 3-(imidazol-4-yl)-2-oxopropyl phosphate + H2O. Its pathway is amino-acid biosynthesis; L-histidine biosynthesis; L-histidine from 5-phospho-alpha-D-ribose 1-diphosphate: step 6/9. The sequence is that of Imidazoleglycerol-phosphate dehydratase from Deinococcus geothermalis (strain DSM 11300 / CIP 105573 / AG-3a).